We begin with the raw amino-acid sequence, 1204 residues long: Exportin-5 (1204 aa).

The residue at position 2 (Ala-2) is an N-acetylalanine. Residues 2-108 (AMDQVNALCE…ANGTLNILEE (107 aa)) form a necessary for interaction with Ran region. Lys-396 bears the N6-acetyllysine mark. Residues 533-640 (ELLQMVLNFD…KQLLSNELLL (108 aa)) form a necessary for interaction with ILF3 region. A pre-miRNA binding region spans residues 641 to 642 (TQ). At Ser-826 the chain carries Phosphoserine.

This sequence belongs to the exportin family. In terms of assembly, component of a nuclear export receptor complex composed of XPO5, RAN, dsRNA-binding proteins and dsRNA. Found in a nuclear export complex with XPO5, RAN, EEF1A1, and aminoacylated tRNA. Found in a nuclear export complex with XPO5, RAN, ILF3 and dsRNA. Found in a nuclear export complex with XPO5, RAN and pre-miRNA. Found in a nuclear export complex with XPO5, RAN, ILF3 and minihelix VA1 dsRNA. Found in a nuclear export complex with XPO5, RAN, ILF3, ZNF346 and dsRNA. Interacts with EEF1A1, ILF3, NUP153, NUP214 and ZNF346. Interacts with RAN and cargo proteins in a GTP-dependent manner. Interacts with isoform 5 of ADAR/ADAR1 (via DRBM domains). Interacts with SMAD4; mediates nuclear export of SMAD4. Interacts with RAN (GTP-bound form). As to expression, expressed in heart, brain, placenta, lung, skeletal muscle, kidney and pancreas.

It is found in the nucleus. The protein localises to the cytoplasm. Its function is as follows. Mediates the nuclear export of proteins bearing a double-stranded RNA binding domain (dsRBD) and double-stranded RNAs (cargos). XPO5 in the nucleus binds cooperatively to the RNA and to the GTPase Ran in its active GTP-bound form. Proteins containing dsRBDs can associate with this trimeric complex through the RNA. Docking of this complex to the nuclear pore complex (NPC) is mediated through binding to nucleoporins. Upon transit of a nuclear export complex into the cytoplasm, hydrolysis of Ran-GTP to Ran-GDP (induced by RANBP1 and RANGAP1, respectively) cause disassembly of the complex and release of the cargo from the export receptor. XPO5 then returns to the nuclear compartment by diffusion through the nuclear pore complex, to mediate another round of transport. The directionality of nuclear export is thought to be conferred by an asymmetric distribution of the GTP- and GDP-bound forms of Ran between the cytoplasm and nucleus. Overexpression may in some circumstances enhance RNA-mediated gene silencing (RNAi). Mediates nuclear export of isoform 5 of ADAR/ADAR1 in a RanGTP-dependent manner. Mediates the nuclear export of micro-RNA precursors, which form short hairpins. Also mediates the nuclear export of synthetic short hairpin RNAs used for RNA interference. In some circumstances can also mediate the nuclear export of deacylated and aminoacylated tRNAs. Specifically recognizes dsRNAs that lack a 5'-overhang in a sequence-independent manner, have only a short 3'-overhang, and that have a double-stranded length of at least 15 base-pairs. Binding is dependent on Ran-GTP. Functionally, (Microbial infection) Mediates the nuclear export of adenovirus VA1 dsRNA. The sequence is that of Exportin-5 (XPO5) from Homo sapiens (Human).